Here is a 100-residue protein sequence, read N- to C-terminus: Proline-rich protein 15-like protein (100 aa).

Residues 26–100 (PDTYTQSEGG…LFDDREGKGQ (75 aa)) are disordered. Residues 53 to 62 (RLEKIVDKNT) show a composition bias toward basic and acidic residues.

This sequence belongs to the PRR15 family.

The sequence is that of Proline-rich protein 15-like protein (PRR15L) from Bos taurus (Bovine).